We begin with the raw amino-acid sequence, 393 residues long: Beta-ureidopropionase (393 aa).

In terms of domain architecture, CN hydrolase spans 72 to 344; sequence VRVGLVQNRI…DGLLVTELNL (273 aa). Glutamate 119 functions as the Proton acceptor in the catalytic mechanism. Lysine 196 acts as the Proton donor in catalysis. Cysteine 233 functions as the Nucleophile in the catalytic mechanism. Position 378 is a phosphoserine (serine 378).

The protein belongs to the carbon-nitrogen hydrolase superfamily. BUP family. In terms of assembly, homodimer, homotetramer, homooctamer; can also form higher homooligomers. Post-translationally, the N-terminus is blocked. In terms of tissue distribution, detected in liver (at protein level).

It localises to the cytoplasm. It catalyses the reaction 3-(carbamoylamino)propanoate + H2O + 2 H(+) = beta-alanine + NH4(+) + CO2. It carries out the reaction 3-(carbamoylamino)-2-methylpropanoate + H2O + 2 H(+) = (R)-3-amino-2-methylpropanoate + NH4(+) + CO2. It participates in amino-acid biosynthesis; beta-alanine biosynthesis. Allosteric enzyme with positive cooperativity toward the substrate N-carbamoyl-beta-alanine at low substrate concentrations (below 12 nM). Displays no cooperativity at substrate levels above 12 nM. Its function is as follows. Catalyzes a late step in pyrimidine degradation. Converts N-carbamoyl-beta-alanine (3-ureidopropanoate) into beta-alanine, ammonia and carbon dioxide. Likewise, converts N-carbamoyl-beta-aminoisobutyrate (3-ureidoisobutyrate) into beta-aminoisobutyrate, ammonia and carbon dioxide. The polypeptide is Beta-ureidopropionase (Upb1) (Rattus norvegicus (Rat)).